The sequence spans 71 residues: uncharacterized protein (71 aa).

The chain crosses the membrane as a helical span at residues 44–66 (LFFLVFRRLFSWFLVLLPSPRFF).

Its subcellular location is the membrane. This is an uncharacterized protein from Saccharomyces cerevisiae (strain ATCC 204508 / S288c) (Baker's yeast).